Here is a 219-residue protein sequence, read N- to C-terminus: MTNNEKVINNKKSTDSSKLFRYQAKFVAGAMNINQIPNFLLPEIAFIGKSNVGKSSLINTICNNKNLAKVSNIPGRTGQINFFNLADKLIIVDLPGYGFANVPISVKEQWEVLISYYLRNSNNLRLVNLLIDSRRGIKENDKKVAELLLKNKRSFQIIFTKFDKVTDCKNLTDEAQNFLTTLHYSCNVMYVSSRSKEGARELKASLAKCIIKPQRSKGR.

In terms of domain architecture, EngB-type G spans 40-212 (LLPEIAFIGK…KASLAKCIIK (173 aa)). GTP is bound by residues 48 to 55 (GKSNVGKS), 75 to 79 (GRTGQ), 93 to 96 (DLPG), 160 to 163 (TKFD), and 191 to 193 (VSS). 2 residues coordinate Mg(2+): serine 55 and threonine 77.

This sequence belongs to the TRAFAC class TrmE-Era-EngA-EngB-Septin-like GTPase superfamily. EngB GTPase family. Mg(2+) is required as a cofactor.

Necessary for normal cell division and for the maintenance of normal septation. The sequence is that of Probable GTP-binding protein EngB from Rickettsia canadensis (strain McKiel).